The following is an 865-amino-acid chain: SWI/SNF chromatin-remodeling complex subunit sol1 (865 aa).

Disordered regions lie at residues 1-34 (MNNQGFVPASDYPTAVSYPTQGQSYNTQEEQPAY), 54-92 (MMNTSENEPNNLAHSQPFRQSPSTQRNLPNQSFDFASNG), 116-143 (QEKEAAMQQQQQQQQQQQLYQRQMQSRE), and 163-183 (VRQTPQPAPSPNTPSGNANQL). The segment covering 17–30 (SYPTQGQSYNTQEE) has biased composition (polar residues). Positions 121–139 (AMQQQQQQQQQQQLYQRQM) are enriched in low complexity. The region spanning 188–278 (AASFDKFMVS…YLLPYEEAWL (91 aa)) is the ARID domain. The segment at 288-380 (QQAKANHSAN…QTSSSAAPVD (93 aa)) is disordered. Positions 328–353 (HSKSPSPAFTANRFSPAAPTTVSSER) are enriched in polar residues. A compositionally biased stretch (pro residues) spans 356-368 (PPYPSAPTRPTPP). Phosphoserine is present on residues serine 852 and serine 855.

It belongs to the SWI1 family. As to quaternary structure, component of the SWI/SNF global transcription activator complex composed of at least arp9, arp42, snf5, snf22, snf30, sbf59, sol1, ssr1, ssr2, ssr3, ssr4 and tfg3.

Its subcellular location is the nucleus. Its function is as follows. Component of the SWI/SNF complex, an ATP-dependent chromatin remodeling complex, required for the positive and negative regulation of gene expression of a large number of genes. It changes chromatin structure by altering DNA-histone contacts within a nucleosome, leading eventually to a change in nucleosome position, thus facilitating or repressing binding of gene-specific transcription factors. This is SWI/SNF chromatin-remodeling complex subunit sol1 (sol1) from Schizosaccharomyces pombe (strain 972 / ATCC 24843) (Fission yeast).